A 125-amino-acid chain; its full sequence is Small ribosomal subunit protein uS12 (125 aa).

A disordered region spans residues 1 to 28 (MPTINQLVRKGREKVKKKSKAPALEGNP). Positions 9–20 (RKGREKVKKKSK) are enriched in basic residues. At Asp89 the chain carries 3-methylthioaspartic acid. Residues 104-125 (AAGVKDRKQSRSKYGTKRPKEK) are disordered. Basic residues predominate over residues 113 to 125 (SRSKYGTKRPKEK).

This sequence belongs to the universal ribosomal protein uS12 family. In terms of assembly, part of the 30S ribosomal subunit. Contacts proteins S8 and S17. May interact with IF1 in the 30S initiation complex.

In terms of biological role, with S4 and S5 plays an important role in translational accuracy. Its function is as follows. Interacts with and stabilizes bases of the 16S rRNA that are involved in tRNA selection in the A site and with the mRNA backbone. Located at the interface of the 30S and 50S subunits, it traverses the body of the 30S subunit contacting proteins on the other side and probably holding the rRNA structure together. The combined cluster of proteins S8, S12 and S17 appears to hold together the shoulder and platform of the 30S subunit. In Persephonella marina (strain DSM 14350 / EX-H1), this protein is Small ribosomal subunit protein uS12.